The following is a 477-amino-acid chain: Aspartyl/glutamyl-tRNA(Asn/Gln) amidotransferase subunit B (477 aa).

The protein belongs to the GatB/GatE family. GatB subfamily. Heterotrimer of A, B and C subunits.

The catalysed reaction is L-glutamyl-tRNA(Gln) + L-glutamine + ATP + H2O = L-glutaminyl-tRNA(Gln) + L-glutamate + ADP + phosphate + H(+). It catalyses the reaction L-aspartyl-tRNA(Asn) + L-glutamine + ATP + H2O = L-asparaginyl-tRNA(Asn) + L-glutamate + ADP + phosphate + 2 H(+). Allows the formation of correctly charged Asn-tRNA(Asn) or Gln-tRNA(Gln) through the transamidation of misacylated Asp-tRNA(Asn) or Glu-tRNA(Gln) in organisms which lack either or both of asparaginyl-tRNA or glutaminyl-tRNA synthetases. The reaction takes place in the presence of glutamine and ATP through an activated phospho-Asp-tRNA(Asn) or phospho-Glu-tRNA(Gln). In Lawsonia intracellularis (strain PHE/MN1-00), this protein is Aspartyl/glutamyl-tRNA(Asn/Gln) amidotransferase subunit B.